We begin with the raw amino-acid sequence, 55 residues long: Mitochondrial import receptor subunit TOM7 homolog (55 aa).

Over 1–20 (MVKLSKEAKQRLQQLFKGGQ) the chain is Cytoplasmic. The helical transmembrane segment at 21–40 (FAIRWGFIPLVIYLGFTRGA) threads the bilayer. At 41-55 (DPGMPEPSVLSLLWG) the chain is on the mitochondrial intermembrane side.

Belongs to the Tom7 family. In terms of assembly, forms part of the preprotein translocase complex of the outer mitochondrial membrane (TOM complex) which consists of at least 7 different proteins (TOMM5, TOMM6, TOMM7, TOMM20, TOMM22, TOMM40 and TOMM70).

It is found in the mitochondrion outer membrane. Required for assembly and stability of the TOM complex. Positive regulator of PRKN translocation to damaged mitochondria. Acts probably by stabilizing PINK1 on the outer membrane of depolarized mitochondria. The chain is Mitochondrial import receptor subunit TOM7 homolog (Tomm7) from Mus musculus (Mouse).